The primary structure comprises 934 residues: 2-oxoglutarate dehydrogenase E1 component (934 aa).

The protein belongs to the alpha-ketoglutarate dehydrogenase family. As to quaternary structure, homodimer. Part of the 2-oxoglutarate dehydrogenase (OGDH) complex composed of E1 (2-oxoglutarate dehydrogenase), E2 (dihydrolipoamide succinyltransferase) and E3 (dihydrolipoamide dehydrogenase); the complex contains multiple copies of the three enzymatic components (E1, E2 and E3). Thiamine diphosphate serves as cofactor.

The catalysed reaction is N(6)-[(R)-lipoyl]-L-lysyl-[protein] + 2-oxoglutarate + H(+) = N(6)-[(R)-S(8)-succinyldihydrolipoyl]-L-lysyl-[protein] + CO2. Its function is as follows. E1 component of the 2-oxoglutarate dehydrogenase (OGDH) complex which catalyzes the decarboxylation of 2-oxoglutarate, the first step in the conversion of 2-oxoglutarate to succinyl-CoA and CO(2). This is 2-oxoglutarate dehydrogenase E1 component (sucA) from Coxiella burnetii (strain RSA 493 / Nine Mile phase I).